We begin with the raw amino-acid sequence, 257 residues long: UPF0246 protein Shew185_1115 (257 aa).

This sequence belongs to the UPF0246 family.

In Shewanella baltica (strain OS185), this protein is UPF0246 protein Shew185_1115.